The chain runs to 200 residues: Lipopolysaccharide core heptose(II)-phosphate phosphatase (200 aa).

A signal peptide spans 1-25 (MLAFCRSSLKSKKYFIILLALAAIA).

Belongs to the phosphoglycerate mutase family. Ais subfamily.

The protein resides in the periplasm. It functions in the pathway bacterial outer membrane biogenesis; lipopolysaccharide metabolism. Functionally, catalyzes the dephosphorylation of heptose(II) of the outer membrane lipopolysaccharide core. In Escherichia coli O6:K15:H31 (strain 536 / UPEC), this protein is Lipopolysaccharide core heptose(II)-phosphate phosphatase.